A 133-amino-acid chain; its full sequence is Fatty acid-binding protein homolog 1 (133 aa).

Methionine 1 bears the N-acetylmethionine mark. Residues arginine 107 and 127–129 (RTY) each bind hexadecanoate.

This sequence belongs to the calycin superfamily. Fatty-acid binding protein (FABP) family.

Functionally, has been implicated in the acquisition, storage, and transport of lipids, and may be important to the organism since it is incapable of synthesizing most of its lipids de novo. In Echinococcus granulosus (Hydatid tapeworm), this protein is Fatty acid-binding protein homolog 1 (FABP1).